The sequence spans 319 residues: ATP-dependent 6-phosphofructokinase (319 aa).

Position 11 (Gly-11) interacts with ATP. 21 to 25 lines the ADP pocket; that stretch reads RSIAR. ATP is bound by residues 72 to 73 and 102 to 105; these read RC and GDGS. Asp-103 provides a ligand contact to Mg(2+). 125–127 provides a ligand contact to substrate; it reads TID. Asp-127 functions as the Proton acceptor in the catalytic mechanism. Arg-154 serves as a coordination point for ADP. Residues Arg-162 and 169-171 contribute to the substrate site; that span reads MGR. ADP contacts are provided by residues 185-187, Arg-211, and 213-215; these read GAE and KLH. Residues Glu-222, Lys-243, and 249–252 contribute to the substrate site; that span reads HVQR.

It belongs to the phosphofructokinase type A (PFKA) family. ATP-dependent PFK group I subfamily. Prokaryotic clade 'B1' sub-subfamily. As to quaternary structure, homotetramer. It depends on Mg(2+) as a cofactor.

It is found in the cytoplasm. It carries out the reaction beta-D-fructose 6-phosphate + ATP = beta-D-fructose 1,6-bisphosphate + ADP + H(+). It participates in carbohydrate degradation; glycolysis; D-glyceraldehyde 3-phosphate and glycerone phosphate from D-glucose: step 3/4. Allosterically activated by ADP and other diphosphonucleosides, and allosterically inhibited by phosphoenolpyruvate. In terms of biological role, catalyzes the phosphorylation of D-fructose 6-phosphate to fructose 1,6-bisphosphate by ATP, the first committing step of glycolysis. The chain is ATP-dependent 6-phosphofructokinase from Finegoldia magna (strain ATCC 29328 / DSM 20472 / WAL 2508) (Peptostreptococcus magnus).